A 549-amino-acid polypeptide reads, in one-letter code: CTP synthase (549 aa).

Positions 1-272 (MPPKSSTTKH…DAYVVRRMDL (272 aa)) are amidoligase domain. Residue Ser19 participates in CTP binding. Ser19 contacts UTP. Residues 20–25 (SLGKGL) and Asp77 contribute to the ATP site. 2 residues coordinate Mg(2+): Asp77 and Glu146. Residues 153 to 155 (DIE), 193 to 198 (KTKPTQ), and Lys229 each bind CTP. UTP-binding positions include 193–198 (KTKPTQ) and Lys229. One can recognise a Glutamine amidotransferase type-1 domain in the interval 301–548 (VGKYIDLPDA…VKAAVERKTS (248 aa)). Gly360 contributes to the L-glutamine binding site. Cys387 serves as the catalytic Nucleophile; for glutamine hydrolysis. Residues 388 to 391 (LGLQ), Glu411, and Arg473 contribute to the L-glutamine site. Active-site residues include His521 and Glu523.

It belongs to the CTP synthase family. In terms of assembly, homotetramer.

It carries out the reaction UTP + L-glutamine + ATP + H2O = CTP + L-glutamate + ADP + phosphate + 2 H(+). It catalyses the reaction L-glutamine + H2O = L-glutamate + NH4(+). The catalysed reaction is UTP + NH4(+) + ATP = CTP + ADP + phosphate + 2 H(+). It participates in pyrimidine metabolism; CTP biosynthesis via de novo pathway; CTP from UDP: step 2/2. Its activity is regulated as follows. Allosterically activated by GTP, when glutamine is the substrate; GTP has no effect on the reaction when ammonia is the substrate. The allosteric effector GTP functions by stabilizing the protein conformation that binds the tetrahedral intermediate(s) formed during glutamine hydrolysis. Inhibited by the product CTP, via allosteric rather than competitive inhibition. In terms of biological role, catalyzes the ATP-dependent amination of UTP to CTP with either L-glutamine or ammonia as the source of nitrogen. Regulates intracellular CTP levels through interactions with the four ribonucleotide triphosphates. This is CTP synthase from Streptomyces coelicolor (strain ATCC BAA-471 / A3(2) / M145).